The chain runs to 761 residues: Elongation factor G, mitochondrial (761 aa).

The N-terminal 42 residues, 1 to 42 (MSVQKMMRVPRKMVGGRIPFFTCSKVFSGFSRRSFHESPLAR), are a transit peptide targeting the mitochondrion. Residues 68–349 (NKLRNIGISA…AIVDYLPNPS (282 aa)) form the tr-type G domain. Residues 77-84 (AHIDSGKT), 148-152 (DTPGH), and 202-205 (NKMD) contribute to the GTP site.

It belongs to the TRAFAC class translation factor GTPase superfamily. Classic translation factor GTPase family. EF-G/EF-2 subfamily. The precursor is processed in two steps involving mitochondrial intermediate peptidase (MIP) and mitochondrial processing peptidase (MPP).

It localises to the mitochondrion. Its pathway is protein biosynthesis; polypeptide chain elongation. Functionally, mitochondrial GTPase that catalyzes the GTP-dependent ribosomal translocation step during translation elongation. During this step, the ribosome changes from the pre-translocational (PRE) to the post-translocational (POST) state as the newly formed A-site-bound peptidyl-tRNA and P-site-bound deacylated tRNA move to the P and E sites, respectively. Catalyzes the coordinated movement of the two tRNA molecules, the mRNA and conformational changes in the ribosome. The chain is Elongation factor G, mitochondrial from Saccharomyces cerevisiae (strain YJM789) (Baker's yeast).